Consider the following 81-residue polypeptide: MDGGQPIPSSLVPLGNESADSSMSLEQKMTFVFVILLFIFLGILIVRCFRILLDPYRSMPTSTWADGLEGLEKGQFDHALA.

Residues 29 to 49 (MTFVFVILLFIFLGILIVRCF) traverse the membrane as a helical segment.

The protein belongs to the cortexin family.

The protein resides in the membrane. This Homo sapiens (Human) protein is Cortexin-3 (CTXN3).